Reading from the N-terminus, the 255-residue chain is Trypsin alpha-4 (255 aa).

The signal sequence occupies residues 1 to 16 (MLKFVVLLCAISCALG). The propeptide at 17 to 30 (AAVPEGMVPQLDGR) is activation peptide. The Peptidase S1 domain occupies 31–253 (IVGGVATTIS…LRTWVVSAAS (223 aa)). Cysteine 56 and cysteine 72 are joined by a disulfide. Catalysis depends on charge relay system residues histidine 71 and aspartate 116. 2 cysteine pairs are disulfide-bonded: cysteine 179-cysteine 196 and cysteine 205-cysteine 229. The active-site Charge relay system is the serine 209.

The protein belongs to the peptidase S1 family.

The protein resides in the secreted. It is found in the extracellular space. The catalysed reaction is Preferential cleavage: Arg-|-Xaa, Lys-|-Xaa.. The protein is Trypsin alpha-4 of Lucilia cuprina (Green bottle fly).